The sequence spans 360 residues: Peptide chain release factor 1 (360 aa).

The residue at position 233 (glutamine 233) is an N5-methylglutamine. Positions 286 to 305 are disordered; sequence NEIAQERKSQVGTGDRSERI.

This sequence belongs to the prokaryotic/mitochondrial release factor family. Post-translationally, methylated by PrmC. Methylation increases the termination efficiency of RF1.

It localises to the cytoplasm. In terms of biological role, peptide chain release factor 1 directs the termination of translation in response to the peptide chain termination codons UAG and UAA. This is Peptide chain release factor 1 from Acetivibrio thermocellus (strain ATCC 27405 / DSM 1237 / JCM 9322 / NBRC 103400 / NCIMB 10682 / NRRL B-4536 / VPI 7372) (Clostridium thermocellum).